Reading from the N-terminus, the 210-residue chain is Ribonuclease HII (210 aa).

The RNase H type-2 domain occupies Gly18 to Leu210. A divalent metal cation-binding residues include Asp24, Glu25, and Asp116.

It belongs to the RNase HII family. The cofactor is Mn(2+). It depends on Mg(2+) as a cofactor.

It is found in the cytoplasm. It catalyses the reaction Endonucleolytic cleavage to 5'-phosphomonoester.. Endonuclease that specifically degrades the RNA of RNA-DNA hybrids. The chain is Ribonuclease HII from Shewanella baltica (strain OS223).